The sequence spans 328 residues: UDP-glucose 4-epimerase (328 aa).

Residues Phe20–Val21, Val41–Asn46, Asp57–Ile58, Cys77–Ala81, Ser123, Tyr149, and Lys153 contribute to the NAD(+) site. Ser123 and Tyr149 together coordinate substrate. Tyr149 functions as the Proton acceptor in the catalytic mechanism. Substrate contacts are provided by residues Gly198 to Ile199 and Ser215 to Asn217.

Belongs to the NAD(P)-dependent epimerase/dehydratase family. In terms of assembly, homodimer. NAD(+) is required as a cofactor.

It catalyses the reaction UDP-alpha-D-glucose = UDP-alpha-D-galactose. It functions in the pathway bacterial outer membrane biogenesis; LPS O-antigen biosynthesis. Involved in the metabolism of galactose. Catalyzes the conversion of UDP-galactose (UDP-Gal) to UDP-glucose (UDP-Glc) through a mechanism involving the transient reduction of NAD. In Vibrio cholerae, this protein is UDP-glucose 4-epimerase (galE).